The sequence spans 449 residues: Biotin carboxylase (449 aa).

The Biotin carboxylation domain maps to 1–445 (MLEKVLIANR…NIHYLEKKLG (445 aa)). ATP contacts are provided by residues Lys116, Lys159, 165–166 (GG), 201–204 (EKFL), His209, and His236. The 198-residue stretch at 120-317 (KDAMKRAGVP…IVKEMLRIAS (198 aa)) folds into the ATP-grasp domain. Lys238 contacts hydrogencarbonate. 2 residues coordinate ATP: Glu276 and Glu288. Positions 276, 288, and 290 each coordinate Mg(2+). Mn(2+)-binding residues include Glu276, Glu288, and Asn290. 3 residues coordinate hydrogencarbonate: Arg292, Val295, and Arg338. Residue Arg292 is part of the active site. Arg338 serves as a coordination point for biotin.

In terms of assembly, acetyl-CoA carboxylase is a heterohexamer of biotin carboxyl carrier protein, biotin carboxylase and the two subunits of carboxyl transferase in a 2:2 complex. Requires Mg(2+) as cofactor. Mn(2+) serves as cofactor.

The enzyme catalyses N(6)-biotinyl-L-lysyl-[protein] + hydrogencarbonate + ATP = N(6)-carboxybiotinyl-L-lysyl-[protein] + ADP + phosphate + H(+). It participates in lipid metabolism; malonyl-CoA biosynthesis; malonyl-CoA from acetyl-CoA: step 1/1. This protein is a component of the acetyl coenzyme A carboxylase complex; first, biotin carboxylase catalyzes the carboxylation of the carrier protein and then the transcarboxylase transfers the carboxyl group to form malonyl-CoA. This is Biotin carboxylase (accC) from Pseudomonas aeruginosa (strain ATCC 15692 / DSM 22644 / CIP 104116 / JCM 14847 / LMG 12228 / 1C / PRS 101 / PAO1).